Reading from the N-terminus, the 477-residue chain is Cytochrome c oxidase subunit 1 (477 aa).

A helical transmembrane segment spans residues 16 to 36 (VGTMYLMLGMWSGFGGLNLSW). Residues glutamate 41 and glycine 46 each coordinate Ca(2+). Histidine 62 is a binding site for Fe(II)-heme a. 6 helical membrane-spanning segments follow: residues 64-84 (IMMI…NWLL), 101-121 (FSFW…FIDY), 149-171 (ILGL…VTFL), 185-205 (LFVW…PVLA), 236-256 (LFWF…FGLV), and 269-289 (VFGS…GFIV). Histidine 242 serves as a coordination point for Cu cation. Residues 242 to 246 (HPEVY) constitute a cross-link (1'-histidyl-3'-tyrosine (His-Tyr)). Residue tyrosine 246 participates in O2 binding. Cu cation contacts are provided by histidine 292 and histidine 293. Transmembrane regions (helical) follow at residues 309 to 329 (AVTM…IATI) and 340 to 360 (TLWV…GVIL). Residues histidine 370 and aspartate 371 each contribute to the Mg(2+) site. Residue histidine 378 participates in heme a3 binding. Histidine 380 contributes to the Fe(II)-heme a binding site. 2 helical membrane-spanning segments follow: residues 382–402 (VLSM…FPFF) and 416–436 (FFLT…LGLG). Ca(2+) is bound at residue proline 443. The chain crosses the membrane as a helical span at residues 455–475 (WSTIGCAMVMVSVSLFIHMQW).

It belongs to the heme-copper respiratory oxidase family. As to quaternary structure, component of the cytochrome c oxidase (complex IV, CIV), a multisubunit enzyme composed of a catalytic core of 3 subunits and several supernumerary subunits. The complex exists as a monomer or a dimer and forms supercomplexes (SCs) in the inner mitochondrial membrane with ubiquinol-cytochrome c oxidoreductase (cytochrome b-c1 complex, complex III, CIII). Heme serves as cofactor. Cu cation is required as a cofactor.

The protein resides in the mitochondrion inner membrane. It catalyses the reaction 4 Fe(II)-[cytochrome c] + O2 + 8 H(+)(in) = 4 Fe(III)-[cytochrome c] + 2 H2O + 4 H(+)(out). It participates in energy metabolism; oxidative phosphorylation. In terms of biological role, component of the cytochrome c oxidase, the last enzyme in the mitochondrial electron transport chain which drives oxidative phosphorylation. The respiratory chain contains 3 multisubunit complexes succinate dehydrogenase (complex II, CII), ubiquinol-cytochrome c oxidoreductase (cytochrome b-c1 complex, complex III, CIII) and cytochrome c oxidase (complex IV, CIV), that cooperate to transfer electrons derived from NADH and succinate to molecular oxygen, creating an electrochemical gradient over the inner membrane that drives transmembrane transport and the ATP synthase. Cytochrome c oxidase is the component of the respiratory chain that catalyzes the reduction of oxygen to water. Electrons originating from reduced cytochrome c in the intermembrane space (IMS) are transferred via the dinuclear copper A center (CU(A)) of subunit 2 and heme A of subunit 1 to the active site in subunit 1, a binuclear center (BNC) formed by heme A3 and copper B (CU(B)). The BNC reduces molecular oxygen to 2 water molecules using 4 electrons from cytochrome c in the IMS and 4 protons from the mitochondrial matrix. The protein is Cytochrome c oxidase subunit 1 (COI) of Pecten maximus (King scallop).